The chain runs to 429 residues: Glutamyl-tRNA reductase (429 aa).

Residues 50–53 (TCNR), Ser-116, 121–123 (EPQ), and Gln-127 each bind substrate. Cys-51 serves as the catalytic Nucleophile. 196–201 (GAGEMA) contacts NADP(+).

Belongs to the glutamyl-tRNA reductase family. As to quaternary structure, homodimer.

It catalyses the reaction (S)-4-amino-5-oxopentanoate + tRNA(Glu) + NADP(+) = L-glutamyl-tRNA(Glu) + NADPH + H(+). It participates in porphyrin-containing compound metabolism; protoporphyrin-IX biosynthesis; 5-aminolevulinate from L-glutamyl-tRNA(Glu): step 1/2. Catalyzes the NADPH-dependent reduction of glutamyl-tRNA(Glu) to glutamate 1-semialdehyde (GSA). This chain is Glutamyl-tRNA reductase, found in Thermodesulfovibrio yellowstonii (strain ATCC 51303 / DSM 11347 / YP87).